The chain runs to 687 residues: DNA ligase (687 aa).

NAD(+)-binding positions include 33 to 37 (DAEFD), 83 to 84 (SL), and Glu113. The active-site N6-AMP-lysine intermediate is the Lys115. Arg136, Glu176, Lys292, and Lys316 together coordinate NAD(+). 4 residues coordinate Zn(2+): Cys410, Cys413, Cys429, and Cys435. In terms of domain architecture, BRCT spans 599–687 (SVPRTLAGVT…GPPAEVGEPT (89 aa)).

The protein belongs to the NAD-dependent DNA ligase family. LigA subfamily. Mg(2+) is required as a cofactor. The cofactor is Mn(2+).

It carries out the reaction NAD(+) + (deoxyribonucleotide)n-3'-hydroxyl + 5'-phospho-(deoxyribonucleotide)m = (deoxyribonucleotide)n+m + AMP + beta-nicotinamide D-nucleotide.. Its function is as follows. DNA ligase that catalyzes the formation of phosphodiester linkages between 5'-phosphoryl and 3'-hydroxyl groups in double-stranded DNA using NAD as a coenzyme and as the energy source for the reaction. It is essential for DNA replication and repair of damaged DNA. This chain is DNA ligase, found in Mycobacterium marinum (strain ATCC BAA-535 / M).